The chain runs to 80 residues: Cell division activator CedA (80 aa).

It belongs to the CedA family.

Functionally, activates the cell division inhibited by chromosomal DNA over-replication. This Escherichia coli O1:K1 / APEC protein is Cell division activator CedA.